A 432-amino-acid chain; its full sequence is MGPAGSLLGSGQMQITLWGSLAAVAIFFVITFLIFLCSSCDREKKPRQHSGDHENLMNVPSDKEMFSRSVTSLATDAPASSEQNGALTNGDILSEDSTLTCMQHYEEVQTSASDLLDSQDSTGKPKCHQSRELPRIPPESAVDTMLTARSVDGDQGLGMEGPYEVLKDSSSQENMVEDCLYETVKEIKEVAAAAHLEKGHSGKAKSTSASKELPGPQTEGKAEFAEYASVDRNKKCRQSVNVESILGNSCDPEEEAPPPVPVKLLDENENLQEKEGGEAEESATDTTSETNKRFSSLSYKSREEDPTLTEEEISAMYSSVNKPGQLVNKSGQSLTVPESTYTSIQGDPQRSPSSCNDLYATVKDFEKTPNSTLPPAGRPSEEPEPDYEAIQTLNREEEKATLGTNGHHGLVPKENDYESISDLQQGRDITRL.

Topologically, residues 1–16 (MGPAGSLLGSGQMQIT) are extracellular. Residues 17-37 (LWGSLAAVAIFFVITFLIFLC) form a helical; Signal-anchor for type III membrane protein membrane-spanning segment. Residues Cys37 and Cys40 are each lipidated (S-palmitoyl cysteine). At 38-432 (SSCDREKKPR…LQQGRDITRL (395 aa)) the chain is on the cytoplasmic side. A phosphoserine mark is found at Ser50 and Ser61. Tyr105 is modified (phosphotyrosine; by LYN). Positions 110–122 (TSASDLLDSQDST) are enriched in polar residues. The interval 110–137 (TSASDLLDSQDSTGKPKCHQSRELPRIP) is disordered. 3 positions are modified to phosphotyrosine: Tyr163, Tyr181, and Tyr227. 2 disordered regions span residues 197–230 (EKGH…YASV) and 244–432 (SILG…ITRL). Residues 220-230 (GKAEFAEYASV) show a composition bias toward basic and acidic residues. At Ser229 the chain carries Phosphoserine. The span at 316–356 (MYSSVNKPGQLVNKSGQSLTVPESTYTSIQGDPQRSPSSCN) shows a compositional bias: polar residues. Tyr317 is subject to Phosphotyrosine; by FYN and LYN. The segment at 317 to 320 (YSSV) is interaction with CSK. The residue at position 354 (Ser354) is a Phosphoserine. Phosphotyrosine is present on Tyr359. Ser380 is subject to Phosphoserine. Phosphotyrosine occurs at positions 387 and 417. The interaction with NHERF1 stretch occupies residues 430–432 (TRL).

Interacts with FYN. When phosphorylated, interacts with CSK. Interacts with NHERF1/EBP50. In resting T-cells, part of a PAG1-NHERF1-MSN complex which is disrupted upon TCR activation. Interacts with LYN on plasma membrane lipid rafts. Identified in a complex with LYN and STAT3. Palmitoylated. In terms of processing, phosphorylated by FYN on Tyr-317 in resting T-cells; which promotes interaction with CSK. Dephosphorylated by PTPRC/CD45 upon TCR activation; which leads to CSK dissociation. May also be dephosphorylated by PTPN11. Hyperphosphorylated in mast cells upon FCER1 activation. Phosphorylated by LYN. Ubiquitously expressed. Present in germinal center B-cells, plasma cells, T-cells, monocytes and platelets (at protein level).

It localises to the cell membrane. Negatively regulates TCR (T-cell antigen receptor)-mediated signaling in T-cells and FCER1 (high affinity immunoglobulin epsilon receptor)-mediated signaling in mast cells. Promotes CSK activation and recruitment to lipid rafts, which results in LCK inhibition. Inhibits immunological synapse formation by preventing dynamic arrangement of lipid raft proteins. May be involved in cell adhesion signaling. The polypeptide is Phosphoprotein associated with glycosphingolipid-enriched microdomains 1 (PAG1) (Homo sapiens (Human)).